Here is a 146-residue protein sequence, read N- to C-terminus: Hemoglobin subunit beta (146 aa).

Valine 1 carries the N-acetylvaline modification. A Globin domain is found at 2–146; sequence HLSGEEKGAV…VATALAHKYH (145 aa). Threonine 12 carries the phosphothreonine modification. Serine 44 is modified (phosphoserine). N6-acetyllysine is present on lysine 59. Histidine 63 is a heme b binding site. The residue at position 82 (lysine 82) is an N6-acetyllysine. Histidine 92 contacts heme b. Cysteine 93 bears the S-nitrosocysteine mark. Lysine 144 bears the N6-acetyllysine mark.

Belongs to the globin family. As to quaternary structure, heterotetramer of two alpha chains and two beta chains. Red blood cells.

In terms of biological role, involved in oxygen transport from the lung to the various peripheral tissues. The protein is Hemoglobin subunit beta (HBB) of Tadarida brasiliensis (Brazilian free-tailed bat).